A 339-amino-acid polypeptide reads, in one-letter code: Protein H339R (339 aa).

Belongs to the asfivirus H339R family. In terms of assembly, interacts with NACA (alpha chain of nascent polypeptide-associated complex).

The protein localises to the host cytoplasm. The protein resides in the host nucleus. It localises to the virion. The polypeptide is Protein H339R (African swine fever virus (strain Badajoz 1971 Vero-adapted) (Ba71V)).